Reading from the N-terminus, the 38-residue chain is Defensin-like peptide 3 (38 aa).

2 disulfide bridges follow: C6/C36 and C13/C29.

Produced by the crural gland and detected in venom from the spur located on each male hind leg.

The protein localises to the secreted. Its function is as follows. Does not show antimicrobial, myotoxic, hemolytic and cell-promoting activities. This is Defensin-like peptide 3 from Ornithorhynchus anatinus (Duckbill platypus).